The primary structure comprises 327 residues: Interleukin-12 subunit beta (327 aa).

An N-terminal signal peptide occupies residues 1-22; it reads MCHQKLTISWFAMVLLVSPLMA. In terms of domain architecture, Ig-like C2-type spans 23 to 106; sequence IWELEKDVYV…LSHSRLLLHK (84 aa). A disulfide bridge connects residues Cys50 and Cys90. 4 N-linked (GlcNAc...) asparagine glycosylation sites follow: Asn125, Asn135, Asn223, and Asn315. The Fibronectin type-III domain occupies 238-327; it reads PPKNLQLKPL…WSEWASVSCN (90 aa).

This sequence belongs to the IL-12B family. Heterodimer with IL12A; disulfide-linked. The heterodimer is known as interleukin IL-12. Heterodimer with IL23A; disulfide-linked. The heterodimer is known as interleukin IL-23. Also secreted as a monomer. Interacts with NBR1; this interaction promotes IL-12 secretion.

The protein resides in the secreted. Functionally, cytokine that can act as a growth factor for activated T and NK cells, enhance the lytic activity of NK/lymphokine-activated killer cells, and stimulate the production of IFN-gamma by resting PBMC. Associates with IL23A to form the IL-23 interleukin, a heterodimeric cytokine which functions in innate and adaptive immunity. IL-23 may constitute with IL-17 an acute response to infection in peripheral tissues. IL-23 binds to a heterodimeric receptor complex composed of IL12RB1 and IL23R, activates the Jak-Stat signaling cascade, stimulates memory rather than naive T-cells and promotes production of pro-inflammatory cytokines. IL-23 induces autoimmune inflammation and thus may be responsible for autoimmune inflammatory diseases and may be important for tumorigenesis. This Sigmodon hispidus (Hispid cotton rat) protein is Interleukin-12 subunit beta (IL12B).